The sequence spans 233 residues: tRNA (guanine-N(7)-)-methyltransferase (233 aa).

The interval 1–21 (MTEESHPLRGAGNFFGRRHGK) is disordered. Residues Glu-64, Glu-89, Asp-116, and Asp-138 each contribute to the S-adenosyl-L-methionine site. Asp-138 is a catalytic residue. Substrate-binding positions include Lys-142, Asp-174, and 212–215 (TRYE).

The protein belongs to the class I-like SAM-binding methyltransferase superfamily. TrmB family.

The enzyme catalyses guanosine(46) in tRNA + S-adenosyl-L-methionine = N(7)-methylguanosine(46) in tRNA + S-adenosyl-L-homocysteine. The protein operates within tRNA modification; N(7)-methylguanine-tRNA biosynthesis. Catalyzes the formation of N(7)-methylguanine at position 46 (m7G46) in tRNA. The sequence is that of tRNA (guanine-N(7)-)-methyltransferase from Brucella anthropi (strain ATCC 49188 / DSM 6882 / CCUG 24695 / JCM 21032 / LMG 3331 / NBRC 15819 / NCTC 12168 / Alc 37) (Ochrobactrum anthropi).